The chain runs to 180 residues: Translation initiation factor IF-3 (180 aa).

Belongs to the IF-3 family. As to quaternary structure, monomer.

The protein resides in the cytoplasm. IF-3 binds to the 30S ribosomal subunit and shifts the equilibrium between 70S ribosomes and their 50S and 30S subunits in favor of the free subunits, thus enhancing the availability of 30S subunits on which protein synthesis initiation begins. The sequence is that of Translation initiation factor IF-3 from Caldanaerobacter subterraneus subsp. tengcongensis (strain DSM 15242 / JCM 11007 / NBRC 100824 / MB4) (Thermoanaerobacter tengcongensis).